A 623-amino-acid polypeptide reads, in one-letter code: Heterogeneous nuclear ribonucleoprotein Q (623 aa).

At Ala-2 the chain carries N-acetylalanine. Ser-159 is modified (phosphoserine). RRM domains follow at residues 162-241 (TEIF…ISVA), 243-325 (NRLF…WADP), and 338-408 (KVLF…FAKP). Lys-168 is covalently cross-linked (Glycyl lysine isopeptide (Lys-Gly) (interchain with G-Cter in SUMO2)). Lys-221 carries the N6-acetyllysine modification. N6-acetyllysine is present on Lys-363. Position 373 is a phosphotyrosine (Tyr-373). The segment at 400 to 561 (NIEIVFAKPP…GARGGRGGNV (162 aa)) is interaction with APOBEC1. Asymmetric dimethylarginine; by PRMT1; alternate is present on Arg-444. The residue at position 444 (Arg-444) is an Omega-N-methylarginine; by PRMT1; alternate. Tandem repeats lie at residues 448-450 (RGG), 451-453 (RGG), 460-464 (YYGYE), 469-472 (YYGY), 478-480 (RGG), and 485-488 (YYGY). The interval 448–559 (RGGRGGYGYP…VRGARGGRGG (112 aa)) is 8 X 3 AA repeats of R-G-G. A 3 X 4 AA repeats of Y-Y-G-Y region spans residues 460 to 488 (YYGYEDYYDYYGYDYHNYRGGYEDPYYGY). Arg-496 carries the post-translational modification Omega-N-methylarginine; by PRMT1. The interval 497-623 (GRGGRGARGA…YQDTFGQQWK (127 aa)) is disordered. Residues 498–500 (RGG) form a 1-4 repeat. Positions 504 to 522 (RGAAPSRGRGAAPPRGRAG) are enriched in low complexity. Arg-510 is modified (asymmetric dimethylarginine; by PRMT1). Asymmetric dimethylarginine; by PRMT1; alternate is present on residues Arg-518, Arg-526, Arg-536, and Arg-539. Omega-N-methylarginine; by PRMT1; alternate is present on residues Arg-518, Arg-526, Arg-536, and Arg-539. Positions 518 to 549 (RGRAGYSQRGGPGSARGVRGARGGAQQQRGRG) are interaction with SMN. One copy of the 1-5 repeat lies at 526–528 (RGG). Tandem repeats lie at residues 539 to 541 (RGG), 554 to 556 (RGG), and 557 to 559 (RGG). A compositionally biased stretch (gly residues) spans 550–562 (VRGARGGRGGNVG). The short motif at 564 to 578 (KRKADGYNQPDSKRR) is the Bipartite nuclear localization signal element. A compositionally biased stretch (polar residues) spans 580–595 (TNNQNWGSQPIAQQPL). At Ser-587 the chain carries Phosphoserine. Lys-607 is covalently cross-linked (Glycyl lysine isopeptide (Lys-Gly) (interchain with G-Cter in SUMO2)). A compositionally biased stretch (polar residues) spans 611–623 (QEFYQDTFGQQWK).

In terms of assembly, isoform 1 is a component of the APOB mRNA editosome complex and interacts with APOBEC1 and A1CF (APOBEC1 complementation factor). Part of a complex associated with the FOS mCRD domain and consisting of PABPC1, PAIP1, CSDE1/UNR, HNRPD and SYNCRIP. Isoform 3 interacts with HNRPR. Interacts with POLR2A hyperphosphorylated C-terminal domain. Isoform 1, isoform 2 and isoform 3 interact with SMN. Isoform 3 interacts through its C-terminal domain with SYT7, SYT8 and SYT9. The non-phosphorylated and phosphorylated forms are colocalized with PAIP1 in polysomes. Interacts with HABP4. Identified in a histone pre-mRNA complex, at least composed of ERI1, LSM11, SLBP, SNRPB, SYNCRIP and YBX1. Identified in the spliceosome C complex. Component of the coding region determinant (CRD)-mediated complex, composed of DHX9, HNRNPU, IGF2BP1, SYNCRIP and YBX1. Identified in a mRNP complex, at least composed of DHX9, DDX3X, ELAVL1, HNRNPU, IGF2BP1, ILF3, PABPC1, PCBP2, PTBP2, STAU1, STAU2, SYNCRIP and YBX1. Identified in a mRNP granule complex, at least composed of ACTB, ACTN4, DHX9, ERG, HNRNPA1, HNRNPA2B1, HNRNPAB, HNRNPD, HNRNPL, HNRNPR, HNRNPU, HSPA1, HSPA8, IGF2BP1, ILF2, ILF3, NCBP1, NCL, PABPC1, PABPC4, PABPN1, RPLP0, RPS3, RPS3A, RPS4X, RPS8, RPS9, SYNCRIP, YBX1 and untranslated mRNAs. Interacts with GTPBP1. Component of the GAIT complex; in humans the complex assembly seems to be a two-step process in which EPRS1 first associates with SYNCRIP to form a pre-GAIT complex which is deficient in GAIT element binding. As to quaternary structure, (Microbial infection) Interacts with minute virus of mice (MVM) NS1 protein. (Microbial infection) Interacts with herpes virus 8/HHV-8 protein vIRF-1; this interaction induces ubiquitination and degradation of SYNCRIP. Phosphorylated on tyrosine. The membrane-bound form found in microsomes is phosphorylated in vitro by insulin receptor tyrosine kinase (INSR). Phosphorylation is inhibited upon binding to RNA, whereas the cytoplasmic form is poorly phosphorylated. In terms of tissue distribution, ubiquitously expressed. Detected in heart, brain, pancreas, placenta, spleen, lung, liver, skeletal muscle, kidney, thymus, prostate, uterus, small intestine, colon, peripheral blood and testis.

It localises to the cytoplasm. The protein localises to the microsome. The protein resides in the endoplasmic reticulum. It is found in the nucleus. Its subcellular location is the nucleoplasm. Heterogenous nuclear ribonucleoprotein (hnRNP) implicated in mRNA processing mechanisms. Component of the CRD-mediated complex that promotes MYC mRNA stability. Isoform 1, isoform 2 and isoform 3 are associated in vitro with pre-mRNA, splicing intermediates and mature mRNA protein complexes. Isoform 1 binds to apoB mRNA AU-rich sequences. Isoform 1 is part of the APOB mRNA editosome complex and may modulate the postranscriptional C to U RNA-editing of the APOB mRNA through either by binding to A1CF (APOBEC1 complementation factor), to APOBEC1 or to RNA itself. May be involved in translationally coupled mRNA turnover. Implicated with other RNA-binding proteins in the cytoplasmic deadenylation/translational and decay interplay of the FOS mRNA mediated by the major coding-region determinant of instability (mCRD) domain. Interacts in vitro preferentially with poly(A) and poly(U) RNA sequences. Isoform 3 may be involved in cytoplasmic vesicle-based mRNA transport through interaction with synaptotagmins. Component of the GAIT (gamma interferon-activated inhibitor of translation) complex which mediates interferon-gamma-induced transcript-selective translation inhibition in inflammation processes. Upon interferon-gamma activation assembles into the GAIT complex which binds to stem loop-containing GAIT elements in the 3'-UTR of diverse inflammatory mRNAs (such as ceruplasmin) and suppresses their translation; seems not to be essential for GAIT complex function. This Homo sapiens (Human) protein is Heterogeneous nuclear ribonucleoprotein Q (SYNCRIP).